The following is a 243-amino-acid chain: Probable transcriptional regulatory protein BPP2422 (243 aa).

The interval 1–21 (MAGHSKWANIQHRKGRQDAKR) is disordered.

It belongs to the TACO1 family.

The protein resides in the cytoplasm. In Bordetella parapertussis (strain 12822 / ATCC BAA-587 / NCTC 13253), this protein is Probable transcriptional regulatory protein BPP2422.